The following is a 139-amino-acid chain: MNNNQGMYNTQTTQGYGNNQGSYQNQMMYNNNNPQNTQTTTFLYASSIQPQQQQQQQQYNNQYNNQQMNSNGYNNQPMYDQSYSTQQYGSSTPSPQYSADSISCCSQVSSTCCYQTQQGYNTPSNNVQYSPSVYQYGRK.

A compositionally biased stretch (polar residues) spans 1 to 12 (MNNNQGMYNTQT). Residues 1 to 98 (MNNNQGMYNT…GSSTPSPQYS (98 aa)) are disordered. Low complexity-rich tracts occupy residues 13-41 (TQGY…QTTT) and 49-98 (QPQQ…PQYS).

The chain is Intrinsically disordered protein, expressed in pharynx 15 from Caenorhabditis elegans.